The primary structure comprises 270 residues: Regulatory protein RecX (270 aa).

It belongs to the RecX family.

It localises to the cytoplasm. Modulates RecA activity. In Bacillus anthracis (strain A0248), this protein is Regulatory protein RecX.